The chain runs to 63 residues: Cytochrome c oxidase subunit 7C, mitochondrial (63 aa).

A mitochondrion-targeting transit peptide spans 1–16 (MLGQSIRRFTTSVVRR). At 17–33 (SHYEEGPGKNLPFSVEN) the chain is on the mitochondrial matrix side. The residue at position 25 (K25) is an N6-acetyllysine; alternate. The residue at position 25 (K25) is an N6-succinyllysine; alternate. The chain crosses the membrane as a helical span at residues 34–60 (KWRLLLMMTVYFGSGFAAPFFIVRHQL). Residues 61–63 (LKK) are Mitochondrial intermembrane-facing.

This sequence belongs to the cytochrome c oxidase VIIc family. Component of the cytochrome c oxidase (complex IV, CIV), a multisubunit enzyme composed of 14 subunits. The complex is composed of a catalytic core of 3 subunits MT-CO1, MT-CO2 and MT-CO3, encoded in the mitochondrial DNA, and 11 supernumerary subunits COX4I, COX5A, COX5B, COX6A, COX6B, COX6C, COX7A, COX7B, COX7C, COX8 and NDUFA4, which are encoded in the nuclear genome. The complex exists as a monomer or a dimer and forms supercomplexes (SCs) in the inner mitochondrial membrane with NADH-ubiquinone oxidoreductase (complex I, CI) and ubiquinol-cytochrome c oxidoreductase (cytochrome b-c1 complex, complex III, CIII), resulting in different assemblies (supercomplex SCI(1)III(2)IV(1) and megacomplex MCI(2)III(2)IV(2)). Interacts with RAB5IF.

The protein localises to the mitochondrion inner membrane. It functions in the pathway energy metabolism; oxidative phosphorylation. Its function is as follows. Component of the cytochrome c oxidase, the last enzyme in the mitochondrial electron transport chain which drives oxidative phosphorylation. The respiratory chain contains 3 multisubunit complexes succinate dehydrogenase (complex II, CII), ubiquinol-cytochrome c oxidoreductase (cytochrome b-c1 complex, complex III, CIII) and cytochrome c oxidase (complex IV, CIV), that cooperate to transfer electrons derived from NADH and succinate to molecular oxygen, creating an electrochemical gradient over the inner membrane that drives transmembrane transport and the ATP synthase. Cytochrome c oxidase is the component of the respiratory chain that catalyzes the reduction of oxygen to water. Electrons originating from reduced cytochrome c in the intermembrane space (IMS) are transferred via the dinuclear copper A center (CU(A)) of subunit 2 and heme A of subunit 1 to the active site in subunit 1, a binuclear center (BNC) formed by heme A3 and copper B (CU(B)). The BNC reduces molecular oxygen to 2 water molecules using 4 electrons from cytochrome c in the IMS and 4 protons from the mitochondrial matrix. The protein is Cytochrome c oxidase subunit 7C, mitochondrial (Cox7c) of Rattus norvegicus (Rat).